A 537-amino-acid polypeptide reads, in one-letter code: CTP synthase (537 aa).

Positions 1–268 are amidoligase domain; sequence MNTKYIFVTG…DNLVCKKLKL (268 aa). Position 14 (Ser14) interacts with CTP. Residue Ser14 participates in UTP binding. 15–20 lines the ATP pocket; the sequence is SLGKGI. Tyr55 is an L-glutamine binding site. Asp72 contributes to the ATP binding site. Residues Asp72 and Glu142 each contribute to the Mg(2+) site. CTP is bound by residues 149-151, 189-194, and Lys225; these read DIE and KTKPTQ. UTP is bound by residues 189 to 194 and Lys225; that span reads KTKPTQ. Residues 293 to 535 enclose the Glutamine amidotransferase type-1 domain; sequence NIALVGKYVE…IKASLNSKHK (243 aa). Gly355 contacts L-glutamine. Catalysis depends on Cys382, which acts as the Nucleophile; for glutamine hydrolysis. L-glutamine contacts are provided by residues 383-386, Glu406, and Arg463; that span reads LGMQ. Catalysis depends on residues His508 and Glu510.

This sequence belongs to the CTP synthase family. In terms of assembly, homotetramer.

It carries out the reaction UTP + L-glutamine + ATP + H2O = CTP + L-glutamate + ADP + phosphate + 2 H(+). The enzyme catalyses L-glutamine + H2O = L-glutamate + NH4(+). The catalysed reaction is UTP + NH4(+) + ATP = CTP + ADP + phosphate + 2 H(+). The protein operates within pyrimidine metabolism; CTP biosynthesis via de novo pathway; CTP from UDP: step 2/2. With respect to regulation, allosterically activated by GTP, when glutamine is the substrate; GTP has no effect on the reaction when ammonia is the substrate. The allosteric effector GTP functions by stabilizing the protein conformation that binds the tetrahedral intermediate(s) formed during glutamine hydrolysis. Inhibited by the product CTP, via allosteric rather than competitive inhibition. Its function is as follows. Catalyzes the ATP-dependent amination of UTP to CTP with either L-glutamine or ammonia as the source of nitrogen. Regulates intracellular CTP levels through interactions with the four ribonucleotide triphosphates. The sequence is that of CTP synthase from Clostridium kluyveri (strain ATCC 8527 / DSM 555 / NBRC 12016 / NCIMB 10680 / K1).